A 311-amino-acid polypeptide reads, in one-letter code: Pyrimidine-specific ribonucleoside hydrolase RihA (311 aa).

The active site involves histidine 240.

The protein belongs to the IUNH family. RihA subfamily.

In terms of biological role, hydrolyzes with equal efficiency cytidine or uridine to ribose and cytosine or uracil, respectively. The sequence is that of Pyrimidine-specific ribonucleoside hydrolase RihA from Escherichia coli (strain K12 / MC4100 / BW2952).